We begin with the raw amino-acid sequence, 332 residues long: Glycerol-3-phosphate dehydrogenase [NAD(P)+] (332 aa).

NADPH-binding residues include Trp13, Lys34, and Lys108. Sn-glycerol 3-phosphate is bound by residues Lys108, Gly136, and Ser138. Ala140 serves as a coordination point for NADPH. Residues Lys191, Asp244, Ser254, Arg255, and Asn256 each contribute to the sn-glycerol 3-phosphate site. Lys191 acts as the Proton acceptor in catalysis. Arg255 serves as a coordination point for NADPH. Val279 and Glu281 together coordinate NADPH.

The protein belongs to the NAD-dependent glycerol-3-phosphate dehydrogenase family.

The protein resides in the cytoplasm. The catalysed reaction is sn-glycerol 3-phosphate + NAD(+) = dihydroxyacetone phosphate + NADH + H(+). It catalyses the reaction sn-glycerol 3-phosphate + NADP(+) = dihydroxyacetone phosphate + NADPH + H(+). Its pathway is membrane lipid metabolism; glycerophospholipid metabolism. In terms of biological role, catalyzes the reduction of the glycolytic intermediate dihydroxyacetone phosphate (DHAP) to sn-glycerol 3-phosphate (G3P), the key precursor for phospholipid synthesis. The sequence is that of Glycerol-3-phosphate dehydrogenase [NAD(P)+] from Francisella philomiragia subsp. philomiragia (strain ATCC 25017 / CCUG 19701 / FSC 153 / O#319-036).